The sequence spans 395 residues: MAWRQLRKRALDAAIILGGGGLLFTSYLTATGDDHFYAEYLMPALQRLLDPESAHRLAVRVISLGLLPRATFQDSNMLEVRVLGHKFRNPVGIAAGFDKHGEAVDGLYKLGFGFVEVGSVTPQPQEGNPRPRVFRLPEDQAVINRYGFNSHGLSAVEHRLRARQQKQTQLTTDGLPLGINLGKNKTSVDAAADYVEGVRILGPLADYLVVNVSSPNTAGLRSLQGKTELRRLLSKVLQERDALKGPQKPAVLVKIAPDLTAQDKEDIASVARELGIDGLIITNTTVSRPVGLQGALRSETGGLSGKPLRDLSTQTIREMYALTQGTIPIIGVGGVSSGQDALEKIQAGASLVQLYTALTFLGPPVVARVKRELEALLKERGFNTVTDAIGVDHRR.

A mitochondrion; not cleaved-targeting transit peptide spans Met1–Ala10. Topologically, residues Met1–Ala10 are mitochondrial matrix. The chain crosses the membrane as a helical span at residues Leu11–Ala30. Residues Thr31–Arg395 are Mitochondrial intermembrane-facing. FMN is bound by residues Ala95–Lys99 and Ser119. A substrate-binding site is contributed by Lys99. Asn144–Phe148 provides a ligand contact to substrate. The FMN site is built by Asn180 and Asn211. A substrate-binding site is contributed by Asn211–Asn216. The Nucleophile role is filled by Ser214. 2 residues coordinate FMN: Lys254 and Thr282. Asn283 to Thr284 contributes to the substrate binding site. Residues Gly305, Gly334, and Tyr355–Thr356 contribute to the FMN site.

Belongs to the dihydroorotate dehydrogenase family. Type 2 subfamily. In terms of assembly, monomer. Requires FMN as cofactor. Post-translationally, the uncleaved transit peptide is required for mitochondrial targeting and proper membrane integration.

It localises to the mitochondrion inner membrane. It carries out the reaction (S)-dihydroorotate + a quinone = orotate + a quinol. It functions in the pathway pyrimidine metabolism; UMP biosynthesis via de novo pathway; orotate from (S)-dihydroorotate (quinone route): step 1/1. Catalyzes the conversion of dihydroorotate to orotate with quinone as electron acceptor. Required for UMP biosynthesis via de novo pathway. The sequence is that of Dihydroorotate dehydrogenase (quinone), mitochondrial (Dhodh) from Mus musculus (Mouse).